We begin with the raw amino-acid sequence, 255 residues long: HTH-type transcriptional regulator SkgA (255 aa).

Residues 3–72 form the HTH merR-type domain; it reads VYTVKQMARL…LKDIQAALDQ (70 aa). A DNA-binding region (H-T-H motif) is located at residues 6–25; sequence VKQMARLSGVSVRALHHYDA.

Functionally, regulates the induction of katG (catalase-peroxidase) in stationary phase. The protein is HTH-type transcriptional regulator SkgA (skgA) of Caulobacter vibrioides (strain ATCC 19089 / CIP 103742 / CB 15) (Caulobacter crescentus).